Reading from the N-terminus, the 202-residue chain is Holliday junction branch migration complex subunit RuvA (202 aa).

The segment at 1–64 (MIGRLRGSLA…EDAHLLYGFY (64 aa)) is domain I. The tract at residues 65–143 (EKRERELFRE…AWESLPGTFT (79 aa)) is domain II. Residues 144-153 (LVSNGPNQAE) are flexible linker. The tract at residues 154-202 (PVASAESDAVSALISLGYKPQEASKAVSAIKEKDLSSADLIRRALKGMG) is domain III.

The protein belongs to the RuvA family. As to quaternary structure, homotetramer. Forms an RuvA(8)-RuvB(12)-Holliday junction (HJ) complex. HJ DNA is sandwiched between 2 RuvA tetramers; dsDNA enters through RuvA and exits via RuvB. An RuvB hexamer assembles on each DNA strand where it exits the tetramer. Each RuvB hexamer is contacted by two RuvA subunits (via domain III) on 2 adjacent RuvB subunits; this complex drives branch migration. In the full resolvosome a probable DNA-RuvA(4)-RuvB(12)-RuvC(2) complex forms which resolves the HJ.

It is found in the cytoplasm. Functionally, the RuvA-RuvB-RuvC complex processes Holliday junction (HJ) DNA during genetic recombination and DNA repair, while the RuvA-RuvB complex plays an important role in the rescue of blocked DNA replication forks via replication fork reversal (RFR). RuvA specifically binds to HJ cruciform DNA, conferring on it an open structure. The RuvB hexamer acts as an ATP-dependent pump, pulling dsDNA into and through the RuvAB complex. HJ branch migration allows RuvC to scan DNA until it finds its consensus sequence, where it cleaves and resolves the cruciform DNA. The protein is Holliday junction branch migration complex subunit RuvA of Pseudomonas savastanoi pv. phaseolicola (strain 1448A / Race 6) (Pseudomonas syringae pv. phaseolicola (strain 1448A / Race 6)).